Here is a 173-residue protein sequence, read N- to C-terminus: Translation initiation factor IF-3 (173 aa).

This sequence belongs to the IF-3 family. Monomer.

The protein resides in the cytoplasm. In terms of biological role, IF-3 binds to the 30S ribosomal subunit and shifts the equilibrium between 70S ribosomes and their 50S and 30S subunits in favor of the free subunits, thus enhancing the availability of 30S subunits on which protein synthesis initiation begins. In Bartonella bacilliformis (strain ATCC 35685 / KC583 / Herrer 020/F12,63), this protein is Translation initiation factor IF-3.